A 159-amino-acid polypeptide reads, in one-letter code: Cyclic pyranopterin monophosphate synthase (159 aa).

Residues 75 to 77 (LCH) and 113 to 114 (ME) contribute to the substrate site. Residue Asp128 is part of the active site.

This sequence belongs to the MoaC family. Homohexamer; trimer of dimers.

It catalyses the reaction (8S)-3',8-cyclo-7,8-dihydroguanosine 5'-triphosphate = cyclic pyranopterin phosphate + diphosphate. It participates in cofactor biosynthesis; molybdopterin biosynthesis. Its function is as follows. Catalyzes the conversion of (8S)-3',8-cyclo-7,8-dihydroguanosine 5'-triphosphate to cyclic pyranopterin monophosphate (cPMP). The sequence is that of Cyclic pyranopterin monophosphate synthase from Aliivibrio salmonicida (strain LFI1238) (Vibrio salmonicida (strain LFI1238)).